The primary structure comprises 418 residues: Glutamyl-tRNA reductase (418 aa).

Residues 49–52 (TCNR), serine 109, 114–116 (EPQ), and glutamine 120 each bind substrate. Cysteine 50 serves as the catalytic Nucleophile. 189–194 (GAGETI) is an NADP(+) binding site.

This sequence belongs to the glutamyl-tRNA reductase family. As to quaternary structure, homodimer.

It catalyses the reaction (S)-4-amino-5-oxopentanoate + tRNA(Glu) + NADP(+) = L-glutamyl-tRNA(Glu) + NADPH + H(+). The protein operates within porphyrin-containing compound metabolism; protoporphyrin-IX biosynthesis; 5-aminolevulinate from L-glutamyl-tRNA(Glu): step 1/2. In terms of biological role, catalyzes the NADPH-dependent reduction of glutamyl-tRNA(Glu) to glutamate 1-semialdehyde (GSA). The polypeptide is Glutamyl-tRNA reductase (Escherichia coli O45:K1 (strain S88 / ExPEC)).